Reading from the N-terminus, the 541-residue chain is Propionyl-CoA carboxylase beta chain, mitochondrial (541 aa).

Residues 1–28 (MAAAIRIRAVAAGARLSVLNCGLGITTR) constitute a mitochondrion transit peptide. Positions 34–292 (PVSVKERIDN…SSQDPAPIRE (259 aa)) constitute a CoA carboxyltransferase N-terminal domain. The carboxyltransferase stretch occupies residues 34–535 (PVSVKERIDN…SKKVHRPWRK (502 aa)). Ser-73 carries the phosphoserine modification. The residue at position 101 (Lys-101) is an N6-acetyllysine; alternate. At Lys-101 the chain carries N6-succinyllysine; alternate. Lys-250 is subject to N6-succinyllysine. The 240-residue stretch at 296–535 (PSDRLVPELD…SKKVHRPWRK (240 aa)) folds into the CoA carboxyltransferase C-terminal domain. The interval 327 to 360 (DEREFFEIMPSYAKNIVVGFARMNGRTVGIVGNQ) is acyl-CoA binding. Residues Lys-476 and Lys-491 each carry the N6-acetyllysine; alternate modification. N6-succinyllysine; alternate is present on residues Lys-476 and Lys-491.

It belongs to the AccD/PCCB family. The holoenzyme is a dodecamer composed of 6 PCCA/alpha subunits and 6 PCCB/beta subunits. As to expression, broadly expressed. Most abundantly expressed in the kidney, liver, small intestine and stomach.

The protein resides in the mitochondrion matrix. The catalysed reaction is propanoyl-CoA + hydrogencarbonate + ATP = (S)-methylmalonyl-CoA + ADP + phosphate + H(+). It carries out the reaction butanoyl-CoA + hydrogencarbonate + ATP = (2S)-ethylmalonyl-CoA + ADP + phosphate + H(+). It participates in metabolic intermediate metabolism; propanoyl-CoA degradation; succinyl-CoA from propanoyl-CoA: step 1/3. This is one of the 2 subunits of the biotin-dependent propionyl-CoA carboxylase (PCC), a mitochondrial enzyme involved in the catabolism of odd chain fatty acids, branched-chain amino acids isoleucine, threonine, methionine, and valine and other metabolites. Propionyl-CoA carboxylase catalyzes the carboxylation of propionyl-CoA/propanoyl-CoA to D-methylmalonyl-CoA/(S)-methylmalonyl-CoA. Within the holoenzyme, the alpha subunit catalyzes the ATP-dependent carboxylation of the biotin carried by the biotin carboxyl carrier (BCC) domain, while the beta subunit then transfers the carboxyl group from carboxylated biotin to propionyl-CoA. Propionyl-CoA carboxylase also significantly acts on butyryl-CoA/butanoyl-CoA, which is converted to ethylmalonyl-CoA/(2S)-ethylmalonyl-CoA. Other alternative minor substrates include (2E)-butenoyl-CoA/crotonoyl-CoA. The polypeptide is Propionyl-CoA carboxylase beta chain, mitochondrial (Mus musculus (Mouse)).